Here is a 185-residue protein sequence, read N- to C-terminus: ATP synthase subunit delta (185 aa).

Belongs to the ATPase delta chain family. In terms of assembly, F-type ATPases have 2 components, F(1) - the catalytic core - and F(0) - the membrane proton channel. F(1) has five subunits: alpha(3), beta(3), gamma(1), delta(1), epsilon(1). CF(0) has four main subunits: a(1), b(1), b'(1) and c(10-14). The alpha and beta chains form an alternating ring which encloses part of the gamma chain. F(1) is attached to F(0) by a central stalk formed by the gamma and epsilon chains, while a peripheral stalk is formed by the delta, b and b' chains.

The protein localises to the cellular thylakoid membrane. Its function is as follows. F(1)F(0) ATP synthase produces ATP from ADP in the presence of a proton or sodium gradient. F-type ATPases consist of two structural domains, F(1) containing the extramembraneous catalytic core and F(0) containing the membrane proton channel, linked together by a central stalk and a peripheral stalk. During catalysis, ATP synthesis in the catalytic domain of F(1) is coupled via a rotary mechanism of the central stalk subunits to proton translocation. Functionally, this protein is part of the stalk that links CF(0) to CF(1). It either transmits conformational changes from CF(0) to CF(1) or is implicated in proton conduction. This chain is ATP synthase subunit delta, found in Crocosphaera subtropica (strain ATCC 51142 / BH68) (Cyanothece sp. (strain ATCC 51142)).